A 530-amino-acid chain; its full sequence is 4,4'-diapolycopene aldehyde oxidase (530 aa).

Catalysis depends on residues Glu-234 and Cys-268.

The protein belongs to the aldehyde dehydrogenase family.

The catalysed reaction is all-trans-4,4'-diapolycopen-4-al + A + H2O = all-trans-4,4'-diapolycopen-4-oate + AH2 + H(+). It carries out the reaction all-trans-4,4'-diapolycopene-4,4'-dial + 2 A + 2 H2O = all-trans-4,4'-diapolycopene-4,4'-dioate + 2 AH2 + 2 H(+). The protein operates within carotenoid biosynthesis. Its function is as follows. Involved in the biosynthesis of C30 carotenoids. Catalyzes the oxidation of 4,4'-diapolycopene-4,4'-dial to yield 4,4'-diapolycopene-4,4'-dioic acid. Also able to catalyze the oxidation of 4,4'-diapolycopen-4-al to yield 4,4'-diapolycopen-4-oic acid. This chain is 4,4'-diapolycopene aldehyde oxidase, found in Methylomonas sp.